Consider the following 418-residue polypeptide: Glutamyl-tRNA reductase (418 aa).

Residues 49–52 (TCNR), S109, 114–116 (EPQ), and Q120 contribute to the substrate site. Residue C50 is the Nucleophile of the active site. 189–194 (GAGETI) lines the NADP(+) pocket.

It belongs to the glutamyl-tRNA reductase family. Homodimer.

The catalysed reaction is (S)-4-amino-5-oxopentanoate + tRNA(Glu) + NADP(+) = L-glutamyl-tRNA(Glu) + NADPH + H(+). The protein operates within porphyrin-containing compound metabolism; protoporphyrin-IX biosynthesis; 5-aminolevulinate from L-glutamyl-tRNA(Glu): step 1/2. Its function is as follows. Catalyzes the NADPH-dependent reduction of glutamyl-tRNA(Glu) to glutamate 1-semialdehyde (GSA). This chain is Glutamyl-tRNA reductase, found in Escherichia coli O45:K1 (strain S88 / ExPEC).